We begin with the raw amino-acid sequence, 324 residues long: MTRETLLDRVIALLWKAEFTLSEKCDIRPRSFDVAARRGKTLLLVKVLSNIEGMSEETSQEMRRLSVLFNGSPIVIGEHTNDHPLEIGAVYLRYGIPCVNIETLHDFFIEEVPPLVYAAPGGLYVEIDGETLRSLREAKNISLGELAMALGVSRRTISKYESGMNATIEAALKLEEILDAPIACPVNMIVMFERTAKDADPSPNDLRNASALEKEALGTLMHIGFEVFHTTKAPFNALSQDDAAKMITGVSDYNEAMLKKAKFMSSLADVAGTYSLFIVKGPHRPKAVGNTLLIKSEELKQFDDRSDLFDLLLSREVKKANAGK.

The 58-residue stretch at 132 to 189 (LRSLREAKNISLGELAMALGVSRRTISKYESGMNATIEAALKLEEILDAPIACPVNMI) folds into the HTH cro/C1-type domain. Positions 143–162 (LGELAMALGVSRRTISKYES) form a DNA-binding region, H-T-H motif.

The chain is Putative HTH-type transcriptional regulatory protein UNCMA_15260 from Methanocella arvoryzae (strain DSM 22066 / NBRC 105507 / MRE50).